Consider the following 314-residue polypeptide: DNA-directed RNA polymerase subunit alpha (314 aa).

Residues 1 to 228 (MIEFEKPNIH…EHLGLFMDIS (228 aa)) form an alpha N-terminal domain (alpha-NTD) region. The interval 242 to 314 (PVAASASDSA…DMNLGFRKED (73 aa)) is alpha C-terminal domain (alpha-CTD).

This sequence belongs to the RNA polymerase alpha chain family. As to quaternary structure, homodimer. The RNAP catalytic core consists of 2 alpha, 1 beta, 1 beta' and 1 omega subunit. When a sigma factor is associated with the core the holoenzyme is formed, which can initiate transcription.

It carries out the reaction RNA(n) + a ribonucleoside 5'-triphosphate = RNA(n+1) + diphosphate. Functionally, DNA-dependent RNA polymerase catalyzes the transcription of DNA into RNA using the four ribonucleoside triphosphates as substrates. This Leuconostoc mesenteroides subsp. mesenteroides (strain ATCC 8293 / DSM 20343 / BCRC 11652 / CCM 1803 / JCM 6124 / NCDO 523 / NBRC 100496 / NCIMB 8023 / NCTC 12954 / NRRL B-1118 / 37Y) protein is DNA-directed RNA polymerase subunit alpha.